The sequence spans 201 residues: MAWMLLLILIMVHPGSCALWVSQPPEIRTLEGSSAFLPCSFNASQGRLAIGSVTWFRDEVVPGKEVRNETPEFRGRLAPLASSRFLHDHQAELHIRDVRGHDASIYVCRVEVLGLGVGTGNGTRLVVEKEHPQLGAGTVLLLRAGFYAVSFLSVAVGSTVYYQGKCLTWKGPRRQLPAVVPAPLPPPCGSSAQLLPPVPGG.

A signal peptide spans 1 to 18 (MAWMLLLILIMVHPGSCA). The Ig-like domain occupies 19–126 (LWVSQPPEIR…VGTGNGTRLV (108 aa)). Residues 19 to 135 (LWVSQPPEIR…VVEKEHPQLG (117 aa)) lie on the Extracellular side of the membrane. Cysteines 39 and 108 form a disulfide. Asn42 and Asn121 each carry an N-linked (GlcNAc...) asparagine glycan. A helical membrane pass occupies residues 136–156 (AGTVLLLRAGFYAVSFLSVAV). The Cytoplasmic segment spans residues 157–201 (GSTVYYQGKCLTWKGPRRQLPAVVPAPLPPPCGSSAQLLPPVPGG).

The protein belongs to the natural cytotoxicity receptor (NCR) family. As to quaternary structure, homodimer in the unliganted form. Interacts with CD3Z. Interacts with and is activated by binding to NCR3LG1. Interacts with and is activated by binding to BAG6. Interacts with and is inhibited by binding to LGALS3.

The protein resides in the cell membrane. In terms of biological role, cell membrane receptor of natural killer/NK cells that is activated by binding of extracellular ligands including BAG6 and NCR3LG1. Stimulates NK cells cytotoxicity toward neighboring cells producing these ligands. It controls, for instance, NK cells cytotoxicity against tumor cells. Engagement of NCR3 by BAG6 also promotes myeloid dendritic cells (DC) maturation, both through killing DCs that did not acquire a mature phenotype, and inducing the release by NK cells of TNFA and IFNG that promote DC maturation. The polypeptide is Natural cytotoxicity triggering receptor 3 (NCR3) (Pan troglodytes (Chimpanzee)).